A 54-amino-acid polypeptide reads, in one-letter code: Putative ankyrin repeat protein RC0701 (54 aa).

The ANK repeat unit spans residues 17–46 (SGKTPLDWYSDYNATKIVETLIKNGGNVSS).

The sequence is that of Putative ankyrin repeat protein RC0701 from Rickettsia conorii (strain ATCC VR-613 / Malish 7).